The sequence spans 806 residues: Protein translocase subunit SecA 2 (806 aa).

ATP-binding positions include Gln-122, 140-144 (GEGKT), and Asp-533.

This sequence belongs to the SecA family. As to quaternary structure, monomer and homodimer. Part of the essential Sec protein translocation apparatus which comprises SecA, SecYEG and auxiliary proteins SecDF. Other proteins may also be involved.

It localises to the cell membrane. Its subcellular location is the cytoplasm. It catalyses the reaction ATP + H2O + cellular proteinSide 1 = ADP + phosphate + cellular proteinSide 2.. Its function is as follows. Part of the Sec protein translocase complex. Interacts with the SecYEG preprotein conducting channel. Has a central role in coupling the hydrolysis of ATP to the transfer of proteins into and across the cell membrane, serving as an ATP-driven molecular motor driving the stepwise translocation of polypeptide chains across the membrane. The chain is Protein translocase subunit SecA 2 from Mycobacterium ulcerans (strain Agy99).